Consider the following 372-residue polypeptide: N-methyl-L-tryptophan oxidase (372 aa).

4–34 (DLIIIGSGSVGAAAGYYATRAGLNVLMTDAH) provides a ligand contact to FAD. Cys308 bears the S-8alpha-FAD cysteine mark.

It belongs to the MSOX/MTOX family. MTOX subfamily. In terms of assembly, monomer. The cofactor is FAD.

It carries out the reaction N(alpha)-methyl-L-tryptophan + O2 + H2O = L-tryptophan + formaldehyde + H2O2. Its function is as follows. Catalyzes the oxidative demethylation of N-methyl-L-tryptophan. The chain is N-methyl-L-tryptophan oxidase from Escherichia coli O7:K1 (strain IAI39 / ExPEC).